A 359-amino-acid polypeptide reads, in one-letter code: Membrane-bound lytic murein transglycosylase C (359 aa).

An N-terminal signal peptide occupies residues 1 to 16; it reads MKKYLALALIAPLLIS. The N-palmitoyl cysteine moiety is linked to residue Cys17. The S-diacylglycerol cysteine moiety is linked to residue Cys17.

It belongs to the transglycosylase Slt family.

The protein localises to the cell outer membrane. It catalyses the reaction Exolytic cleavage of the (1-&gt;4)-beta-glycosidic linkage between N-acetylmuramic acid (MurNAc) and N-acetylglucosamine (GlcNAc) residues in peptidoglycan, from either the reducing or the non-reducing ends of the peptidoglycan chains, with concomitant formation of a 1,6-anhydrobond in the MurNAc residue.. Its function is as follows. Murein-degrading enzyme. May play a role in recycling of muropeptides during cell elongation and/or cell division. The protein is Membrane-bound lytic murein transglycosylase C of Escherichia fergusonii (strain ATCC 35469 / DSM 13698 / CCUG 18766 / IAM 14443 / JCM 21226 / LMG 7866 / NBRC 102419 / NCTC 12128 / CDC 0568-73).